A 368-amino-acid polypeptide reads, in one-letter code: Alanine racemase (368 aa).

The active-site Proton acceptor; specific for D-alanine is K40. At K40 the chain carries N6-(pyridoxal phosphate)lysine. A substrate-binding site is contributed by R134. Y263 (proton acceptor; specific for L-alanine) is an active-site residue. Residue M310 coordinates substrate.

It belongs to the alanine racemase family. Pyridoxal 5'-phosphate serves as cofactor.

It catalyses the reaction L-alanine = D-alanine. It functions in the pathway amino-acid biosynthesis; D-alanine biosynthesis; D-alanine from L-alanine: step 1/1. Functionally, catalyzes the interconversion of L-alanine and D-alanine. May also act on other amino acids. This is Alanine racemase (alr) from Listeria monocytogenes serotype 4b (strain F2365).